Consider the following 162-residue polypeptide: SsrA-binding protein (162 aa).

Belongs to the SmpB family.

The protein resides in the cytoplasm. Functionally, required for rescue of stalled ribosomes mediated by trans-translation. Binds to transfer-messenger RNA (tmRNA), required for stable association of tmRNA with ribosomes. tmRNA and SmpB together mimic tRNA shape, replacing the anticodon stem-loop with SmpB. tmRNA is encoded by the ssrA gene; the 2 termini fold to resemble tRNA(Ala) and it encodes a 'tag peptide', a short internal open reading frame. During trans-translation Ala-aminoacylated tmRNA acts like a tRNA, entering the A-site of stalled ribosomes, displacing the stalled mRNA. The ribosome then switches to translate the ORF on the tmRNA; the nascent peptide is terminated with the 'tag peptide' encoded by the tmRNA and targeted for degradation. The ribosome is freed to recommence translation, which seems to be the essential function of trans-translation. This Colwellia psychrerythraea (strain 34H / ATCC BAA-681) (Vibrio psychroerythus) protein is SsrA-binding protein.